Here is a 378-residue protein sequence, read N- to C-terminus: Putative glutamate--cysteine ligase 2 (378 aa).

The protein belongs to the glutamate--cysteine ligase type 2 family. YbdK subfamily.

It carries out the reaction L-cysteine + L-glutamate + ATP = gamma-L-glutamyl-L-cysteine + ADP + phosphate + H(+). Functionally, ATP-dependent carboxylate-amine ligase which exhibits weak glutamate--cysteine ligase activity. The sequence is that of Putative glutamate--cysteine ligase 2 from Ectopseudomonas mendocina (strain ymp) (Pseudomonas mendocina).